The primary structure comprises 152 residues: Nucleoside diphosphate kinase (152 aa).

6 residues coordinate ATP: Lys11, Phe59, Arg87, Thr93, Arg104, and Asn114. The Pros-phosphohistidine intermediate role is filled by His117.

This sequence belongs to the NDK family. Homotetramer. The cofactor is Mg(2+).

The protein localises to the cytoplasm. The catalysed reaction is a 2'-deoxyribonucleoside 5'-diphosphate + ATP = a 2'-deoxyribonucleoside 5'-triphosphate + ADP. The enzyme catalyses a ribonucleoside 5'-diphosphate + ATP = a ribonucleoside 5'-triphosphate + ADP. In terms of biological role, major role in the synthesis of nucleoside triphosphates other than ATP. The ATP gamma phosphate is transferred to the NDP beta phosphate via a ping-pong mechanism, using a phosphorylated active-site intermediate. This is Nucleoside diphosphate kinase from Prochlorococcus marinus (strain AS9601).